We begin with the raw amino-acid sequence, 6907 residues long: Fibrous sheath-interacting protein 2 (6907 aa).

The segment at 273–292 (EERIEEQQHRNREESDRKKQ) is disordered. Ser-430 is modified (phosphoserine). 8 disordered regions span residues 439 to 472 (SQAFLDPSKEEKETNADWDGRPTKRSSYLCESGP), 954 to 990 (FQKSRQPRISSPSDTKEKYRLTGTRLSNSPRSGRPFP), 1545 to 1573 (VQEDNKEETKSKAKPVAPVSSKTPSTKEM), 3202 to 3257 (VSSD…FDQT), 5650 to 5672 (RTSSNEGRRDSPTQTCRDEEHHS), 5725 to 5781 (SAQS…KPGI), 5850 to 5880 (DKGNQFPGGKVSSVPKVPPRYKEPTTDEAPS), and 6852 to 6874 (GSANPSKEVISETPKPDVSKQGS). The span at 445-460 (PSKEEKETNADWDGRP) shows a compositional bias: basic and acidic residues. The span at 954–966 (FQKSRQPRISSPS) shows a compositional bias: polar residues. Composition is skewed to basic and acidic residues over residues 1545 to 1555 (VQEDNKEETKS) and 3213 to 3229 (SVEDTVKNSEPTKRPDS). The segment covering 5728–5741 (SVTTKKVSSSTNKN) has biased composition (low complexity). Positions 5738–5766 (TNKNISAKEKEEEEREKEKVREEIKSEPS) form a coiled coil. The span at 5743-5778 (SAKEKEEEEREKEKVREEIKSEPSKPDDPQNQRESK) shows a compositional bias: basic and acidic residues.

In terms of assembly, may interact with AKAP4. Predominantly expressed in testis.

Functionally, plays a role in spermatogenesis. The protein is Fibrous sheath-interacting protein 2 (FSIP2) of Homo sapiens (Human).